The following is a 424-amino-acid chain: Glutamate-1-semialdehyde 2,1-aminomutase (424 aa).

N6-(pyridoxal phosphate)lysine is present on Lys263.

The protein belongs to the class-III pyridoxal-phosphate-dependent aminotransferase family. HemL subfamily. Homodimer. Requires pyridoxal 5'-phosphate as cofactor.

Its subcellular location is the cytoplasm. The enzyme catalyses (S)-4-amino-5-oxopentanoate = 5-aminolevulinate. It functions in the pathway porphyrin-containing compound metabolism; protoporphyrin-IX biosynthesis; 5-aminolevulinate from L-glutamyl-tRNA(Glu): step 2/2. This is Glutamate-1-semialdehyde 2,1-aminomutase from Campylobacter jejuni subsp. jejuni serotype O:6 (strain 81116 / NCTC 11828).